We begin with the raw amino-acid sequence, 614 residues long: Chaperone protein DnaK (614 aa).

Position 174 is a phosphothreonine; by autocatalysis (Thr-174). Positions Gln-576–Lys-614 are disordered. The segment covering Gly-578–Asp-589 has biased composition (low complexity).

Belongs to the heat shock protein 70 family.

Acts as a chaperone. The protein is Chaperone protein DnaK of Desulfitobacterium hafniense (strain DSM 10664 / DCB-2).